We begin with the raw amino-acid sequence, 60 residues long: Large ribosomal subunit protein bL32 (60 aa).

Positions 1–21 (MAVQQNKKSPSKRGMHRAHNA) are disordered. Over residues 9 to 19 (SPSKRGMHRAH) the composition is skewed to basic residues.

This sequence belongs to the bacterial ribosomal protein bL32 family.

The protein is Large ribosomal subunit protein bL32 of Albidiferax ferrireducens (strain ATCC BAA-621 / DSM 15236 / T118) (Rhodoferax ferrireducens).